The primary structure comprises 457 residues: PDZ and LIM domain protein 7 (457 aa).

The PDZ domain occupies 1–85 (MDSFKVVLEG…RLSLGLSRAQ (85 aa)). Ser78 is subject to Phosphoserine. Disordered stretches follow at residues 82-142 (SRAQ…LVPD), 176-226 (TEFM…PWAV), and 239-258 (TSTVLTRHSQPATPTPLQSR). Arg103 bears the Asymmetric dimethylarginine mark. Phosphoserine is present on Ser111. Residues 208–221 (EPWPGPTAPSPTSR) are compositionally biased toward pro residues. Ser247 carries the post-translational modification Phosphoserine. LIM zinc-binding domains follow at residues 280–338 (PVCH…VRYA), 339–398 (PSCA…MFGT), and 399–457 (KCHG…FSHV).

In terms of assembly, binds via its LIM zinc-binding 3 domain (LIM 3) to endocytic codes of INSR, but not with those of IGF1R, LDLR, TFRC, or EGFR. Interacts with various PKC isoforms through the LIM zinc-binding domains. Binds to RET in a phosphorylation-independent manner via its LIM zinc-binding domain 2 (LIM 2). Probably part of a complex with SHC and the RET dimer. Interacts with TPM2. Interacts with TBX4 and TBX5. As to expression, isoform 1 and isoform 2 are expressed ubiquitously, however, isoform 2 predominates in skeletal muscle, isoform 1 is more abundant in lung, spleen, leukocytes and fetal liver.

It localises to the cytoplasm. The protein localises to the cytoskeleton. Functionally, may function as a scaffold on which the coordinated assembly of proteins can occur. May play a role as an adapter that, via its PDZ domain, localizes LIM-binding proteins to actin filaments of both skeletal muscle and nonmuscle tissues. Involved in both of the two fundamental mechanisms of bone formation, direct bone formation (e.g. embryonic flat bones mandible and cranium), and endochondral bone formation (e.g. embryonic long bone development). Plays a role during fracture repair. Involved in BMP6 signaling pathway. The chain is PDZ and LIM domain protein 7 (PDLIM7) from Homo sapiens (Human).